A 72-amino-acid chain; its full sequence is Translation initiation factor IF-1 (72 aa).

The S1-like domain maps to M1 to K72.

Belongs to the IF-1 family. As to quaternary structure, component of the 30S ribosomal translation pre-initiation complex which assembles on the 30S ribosome in the order IF-2 and IF-3, IF-1 and N-formylmethionyl-tRNA(fMet); mRNA recruitment can occur at any time during PIC assembly.

The protein localises to the cytoplasm. In terms of biological role, one of the essential components for the initiation of protein synthesis. Stabilizes the binding of IF-2 and IF-3 on the 30S subunit to which N-formylmethionyl-tRNA(fMet) subsequently binds. Helps modulate mRNA selection, yielding the 30S pre-initiation complex (PIC). Upon addition of the 50S ribosomal subunit IF-1, IF-2 and IF-3 are released leaving the mature 70S translation initiation complex. In Syntrophotalea carbinolica (strain DSM 2380 / NBRC 103641 / GraBd1) (Pelobacter carbinolicus), this protein is Translation initiation factor IF-1.